The primary structure comprises 119 residues: Large ribosomal subunit protein uL22c (119 aa).

Belongs to the universal ribosomal protein uL22 family. Part of the 50S ribosomal subunit.

It is found in the plastid. The protein localises to the chloroplast. Its function is as follows. This protein binds specifically to 23S rRNA. Functionally, the globular domain of the protein is located near the polypeptide exit tunnel on the outside of the subunit, while an extended beta-hairpin is found that lines the wall of the exit tunnel in the center of the 70S ribosome. This Marchantia polymorpha (Common liverwort) protein is Large ribosomal subunit protein uL22c (rpl22).